We begin with the raw amino-acid sequence, 50 residues long: Large ribosomal subunit protein bL33B (50 aa).

It belongs to the bacterial ribosomal protein bL33 family.

The sequence is that of Large ribosomal subunit protein bL33B from Streptococcus pneumoniae (strain ATCC BAA-255 / R6).